Here is a 177-residue protein sequence, read N- to C-terminus: Protein GrpE (177 aa).

A disordered region spans residues 1 to 26; the sequence is MSEEIKKDDLQEEVEATETEETVEEV. Residues 10–26 are compositionally biased toward acidic residues; that stretch reads LQEEVEATETEETVEEV.

This sequence belongs to the GrpE family. Homodimer.

The protein resides in the cytoplasm. In terms of biological role, participates actively in the response to hyperosmotic and heat shock by preventing the aggregation of stress-denatured proteins, in association with DnaK and GrpE. It is the nucleotide exchange factor for DnaK and may function as a thermosensor. Unfolded proteins bind initially to DnaJ; upon interaction with the DnaJ-bound protein, DnaK hydrolyzes its bound ATP, resulting in the formation of a stable complex. GrpE releases ADP from DnaK; ATP binding to DnaK triggers the release of the substrate protein, thus completing the reaction cycle. Several rounds of ATP-dependent interactions between DnaJ, DnaK and GrpE are required for fully efficient folding. The chain is Protein GrpE from Streptococcus agalactiae serotype Ia (strain ATCC 27591 / A909 / CDC SS700).